The chain runs to 180 residues: Thebaine synthase 1 (180 aa).

Serine 96 contacts thebaine. Residue histidine 111 is the Proton acceptor of the active site. Residue threonine 127 participates in thebaine binding.

It belongs to the MLP family. As to quaternary structure, homodimer (allosteric) and oligomers. As to expression, expressed in poppy latex.

It catalyses the reaction (7S)-O-acetylsalutaridinol = thebaine + acetate + H(+). It functions in the pathway alkaloid biosynthesis; morphine biosynthesis. Its function is as follows. Catalyzes the formation of thebaine from (7S)-salutaridinol 7-O-acetate at the expense of labile hydroxylated by-products, which are preferentially produced by spontaneous allylic elimination. This Papaver somniferum (Opium poppy) protein is Thebaine synthase 1.